Here is a 440-residue protein sequence, read N- to C-terminus: Chromosomal replication initiator protein DnaA (440 aa).

The interval 1 to 74 (MNPSQILENL…VQSGNKAIIN (74 aa)) is domain I, interacts with DnaA modulators. The interval 74–99 (NIQAQSAKQSNKSTKIDIAHIKAQST) is domain II. The domain III, AAA+ region stretch occupies residues 100 to 316 (ILNPSFTFES…GIIISLNAYA (217 aa)). ATP contacts are provided by G146, G148, K149, and T150. The tract at residues 317–440 (TILGQEITLE…KNKILVKSQS (124 aa)) is domain IV, binds dsDNA.

Belongs to the DnaA family. As to quaternary structure, oligomerizes as a right-handed, spiral filament on DNA at oriC.

It localises to the cytoplasm. Its function is as follows. Plays an essential role in the initiation and regulation of chromosomal replication. ATP-DnaA binds to the origin of replication (oriC) to initiate formation of the DNA replication initiation complex once per cell cycle. Binds the DnaA box (a 9 base pair repeat at the origin) and separates the double-stranded (ds)DNA. Forms a right-handed helical filament on oriC DNA; dsDNA binds to the exterior of the filament while single-stranded (ss)DNA is stabiized in the filament's interior. The ATP-DnaA-oriC complex binds and stabilizes one strand of the AT-rich DNA unwinding element (DUE), permitting loading of DNA polymerase. After initiation quickly degrades to an ADP-DnaA complex that is not apt for DNA replication. Binds acidic phospholipids. The sequence is that of Chromosomal replication initiator protein DnaA from Campylobacter jejuni subsp. jejuni serotype O:2 (strain ATCC 700819 / NCTC 11168).